We begin with the raw amino-acid sequence, 1750 residues long: Brefeldin A-inhibited guanine nucleotide-exchange protein 3 (1750 aa).

A2 carries the N-acetylalanine modification. Disordered regions lie at residues 44–65 (LRSP…IPGP) and 565–596 (EEGS…SSGN). Positions 47 to 61 (PENSSPVADSESGSS) are enriched in polar residues. Basic and acidic residues predominate over residues 565-588 (EEGSHPVENGKGDGGHGGFERSDS). The residue at position 586 (S586) is a Phosphoserine. An SEC7 domain is found at 601 to 788 (AIEQRRAYKL…RALYERISRN (188 aa)). The active site involves E703. Residue S1307 is modified to Phosphoserine.

As to quaternary structure, homodimer.

Its subcellular location is the cytoplasm. The protein localises to the cytosol. It localises to the membrane. Its activity is regulated as follows. Inhibited by brefeldin A. Activates the ARF proteins by exchanging bound GDP for free GTP. Plays a role in vesicular protein sorting. Involved both in the nuclear division phase and in the nuclear fusion phase. The protein is Brefeldin A-inhibited guanine nucleotide-exchange protein 3 (BIG3) of Arabidopsis thaliana (Mouse-ear cress).